The chain runs to 204 residues: Protease (204 aa).

Catalysis depends on residues His53, Asp70, and Cys121.

The protein belongs to the peptidase C5 family. Interacts with protease cofactor pVI-C; this interaction is necessary for protease activation.

It is found in the virion. The protein resides in the host nucleus. It catalyses the reaction Cleaves proteins of the adenovirus and its host cell at two consensus sites: -Yaa-Xaa-Gly-Gly-|-Xaa- and -Yaa-Xaa-Gly-Xaa-|-Gly- (in which Yaa is Met, Ile or Leu, and Xaa is any amino acid).. Requires DNA and protease cofactor for maximal activation. Inside nascent virions, becomes partially activated by binding to the viral DNA, allowing it to cleave the cofactor that binds to the protease and fully activates it. Actin, like the viral protease cofactor, seems to act as a cofactor in the cleavage of cytokeratin 18 and of actin itself. Functionally, cleaves viral precursor proteins (pTP, pIIIa, pVI, pVII, pVIII, and pX) inside newly assembled particles giving rise to mature virions. Protease complexed to its cofactor slides along the viral DNA to specifically locate and cleave the viral precursors. Mature virions have a weakened organization compared to the unmature virions, thereby facilitating subsequent uncoating. Without maturation, the particle lacks infectivity and is unable to uncoat. Late in adenovirus infection, in the cytoplasm, may participate in the cytoskeleton destruction. Cleaves host cell cytoskeletal keratins K7 and K18. The chain is Protease from Porcine adenovirus A serotype 3 (PAdV-3).